We begin with the raw amino-acid sequence, 1280 residues long: Fibronectin type III domain-containing protein (1280 aa).

A signal peptide spans 1 to 19; that stretch reads MWQILLAISIFSLSKLSNA. Over 20-1156 the chain is Extracellular; sequence QQQPKVAPPQ…RVSTPIYQSA (1137 aa). 5 cysteine pairs are disulfide-bonded: Cys58–Cys111, Cys268–Cys321, Cys369–Cys417, Cys460–Cys511, and Cys553–Cys604. 5 Fibronectin type-III domains span residues 628–722, 730–824, 830–933, 939–1033, and 1039–1131; these read PFPP…TGSF, PEKW…VKQF, PTGK…VAAD, PGPP…TEKT, and PAKP…PASD. A compositionally biased stretch (polar residues) spans 1118-1130; that stretch reads YPSQENPQESPAS. Residues 1118–1144 are disordered; the sequence is YPSQENPQESPASDITEARPRPGISNV. Residues 1157 to 1177 form a helical membrane-spanning segment; it reads WFIALLVLIALLLLVLLTFVL. Over 1178-1280 the chain is Cytoplasmic; the sequence is YTRHQGAKYL…KDPSSLATFV (103 aa). Positions 1206-1280 are disordered; it reads DEEEGSFSNN…KDPSSLATFV (75 aa). Basic and acidic residues predominate over residues 1262–1273; sequence DEKKAPPEEKDP.

Component of the acid-insoluble organic matrix of the aragonitic skeleton (at protein level).

The protein resides in the membrane. This is Fibronectin type III domain-containing protein from Acropora millepora (Staghorn coral).